Consider the following 150-residue polypeptide: Avidin-related protein 1 (150 aa).

Residues 1 to 24 (MVHATSPLLLLLLLSLALVAPGLS) form the signal peptide. In terms of domain architecture, Avidin-like spans 26 to 147 (RKCSLTGKWD…GNNDFTRQRT (122 aa)). Cysteine 28 and cysteine 105 are disulfide-bonded. Residues asparagine 36 and serine 40 each contribute to the biotin site. N-linked (GlcNAc...) asparagine glycosylation is present at asparagine 54. Biotin-binding residues include tyrosine 57, threonine 59, and aspartate 63. N-linked (GlcNAc...) asparagine glycosylation is found at asparagine 67 and asparagine 93. Positions 95, 99, and 140 each coordinate biotin.

Belongs to the avidin/streptavidin family. As to quaternary structure, homotetramer. Glycosylated.

The protein localises to the secreted. Its function is as follows. Forms a strong non-covalent specific complex with biotin. This is Avidin-related protein 1 (AVR1) from Gallus gallus (Chicken).